A 24-amino-acid polypeptide reads, in one-letter code: Brevinin-1Bc (24 aa).

Cysteines 18 and 24 form a disulfide.

As to expression, expressed by the skin glands.

The protein localises to the secreted. Its function is as follows. Antibacterial activity against Gram-positive bacterium S.aureus. This Lithobates berlandieri (Rio Grande leopard frog) protein is Brevinin-1Bc.